The sequence spans 197 residues: Peptide deformylase (197 aa).

Positions 106 and 148 each coordinate Fe cation. Glu149 is an active-site residue. Residue His152 participates in Fe cation binding.

It belongs to the polypeptide deformylase family. It depends on Fe(2+) as a cofactor.

The catalysed reaction is N-terminal N-formyl-L-methionyl-[peptide] + H2O = N-terminal L-methionyl-[peptide] + formate. Removes the formyl group from the N-terminal Met of newly synthesized proteins. Requires at least a dipeptide for an efficient rate of reaction. N-terminal L-methionine is a prerequisite for activity but the enzyme has broad specificity at other positions. This is Peptide deformylase from Mycobacterium marinum (strain ATCC BAA-535 / M).